The primary structure comprises 147 residues: uncharacterized protein (147 aa).

A Rhodanese domain is found at 50 to 140 (NQKKAIIVDT…WNSENLPTTF (91 aa)).

This is an uncharacterized protein from Buchnera aphidicola subsp. Schizaphis graminum (strain Sg).